A 170-amino-acid polypeptide reads, in one-letter code: RNA pyrophosphohydrolase (170 aa).

The 144-residue stretch at 6–149 folds into the Nudix hydrolase domain; sequence GFRPNVGIVI…KRDVYRRALK (144 aa). Residues 38-59 carry the Nudix box motif; it reads GGIDDGETPEQAMYRELYEEVG.

It belongs to the Nudix hydrolase family. RppH subfamily. Requires a divalent metal cation as cofactor.

In terms of biological role, accelerates the degradation of transcripts by removing pyrophosphate from the 5'-end of triphosphorylated RNA, leading to a more labile monophosphorylated state that can stimulate subsequent ribonuclease cleavage. The protein is RNA pyrophosphohydrolase of Aliivibrio salmonicida (strain LFI1238) (Vibrio salmonicida (strain LFI1238)).